The following is a 678-amino-acid chain: Probable N-methylproline demethylase (678 aa).

Residues G59, Q102, R220, K299, and T321–R322 each bind FMN. Residues C345, C351, and C363 each contribute to the [4Fe-4S] cluster site. FAD-binding residues include A396, E415, Q423, R433, and A460.

It in the N-terminal section; belongs to the NADH:flavin oxidoreductase/NADH oxidase family. The cofactor is FMN. FAD serves as cofactor. Requires [4Fe-4S] cluster as cofactor.

The enzyme catalyses N-methyl-L-proline + NAD(+) + H2O = L-proline + formaldehyde + NADH + H(+). It functions in the pathway amine and polyamine degradation; stachydrine degradation. Its function is as follows. Possible NADH-dependent oxidase, may function as a demethylase that converts N-methylproline to proline. This chain is Probable N-methylproline demethylase, found in Rhizobium meliloti (strain 1021) (Ensifer meliloti).